The sequence spans 810 residues: Phenylalanine--tRNA ligase beta subunit (810 aa).

One can recognise a tRNA-binding domain in the interval 39–154; that stretch reads APPTEKIVVG…EGTPVGQDIR (116 aa). The 76-residue stretch at 405-480 folds into the B5 domain; that stretch reads PQRAPVSMRA…RIYGFEKIPA (76 aa). Residues D458, D464, E467, and E468 each coordinate Mg(2+). Positions 707 to 809 constitute an FDX-ACB domain; the sequence is SKFPPVRRDI…MARVYGARLR (103 aa).

The protein belongs to the phenylalanyl-tRNA synthetase beta subunit family. Type 1 subfamily. In terms of assembly, tetramer of two alpha and two beta subunits. The cofactor is Mg(2+).

It localises to the cytoplasm. It carries out the reaction tRNA(Phe) + L-phenylalanine + ATP = L-phenylalanyl-tRNA(Phe) + AMP + diphosphate + H(+). The sequence is that of Phenylalanine--tRNA ligase beta subunit from Burkholderia pseudomallei (strain 1710b).